The sequence spans 503 residues: Probable cytosol aminopeptidase (503 aa).

Mn(2+)-binding residues include K274 and D279. K286 is a catalytic residue. Mn(2+)-binding residues include D297, D356, and E358. The active site involves R360.

It belongs to the peptidase M17 family. The cofactor is Mn(2+).

The protein resides in the cytoplasm. The enzyme catalyses Release of an N-terminal amino acid, Xaa-|-Yaa-, in which Xaa is preferably Leu, but may be other amino acids including Pro although not Arg or Lys, and Yaa may be Pro. Amino acid amides and methyl esters are also readily hydrolyzed, but rates on arylamides are exceedingly low.. It catalyses the reaction Release of an N-terminal amino acid, preferentially leucine, but not glutamic or aspartic acids.. Its function is as follows. Presumably involved in the processing and regular turnover of intracellular proteins. Catalyzes the removal of unsubstituted N-terminal amino acids from various peptides. The polypeptide is Probable cytosol aminopeptidase (Burkholderia pseudomallei (strain 1106a)).